Consider the following 2311-residue polypeptide: Proto-oncogene tyrosine-protein kinase ROS (2311 aa).

The signal sequence occupies residues 1–24 (MRNACLLLNRLGAFYFIWISAAYC). Residues 25–1873 (SFSKNCQDLC…LAKDTVTSPD (1849 aa)) are Extracellular-facing. Residues Asn49, Asn65, Asn77, Asn123, Asn132, Asn265, Asn287, Asn307, Asn333, Asn377, Asn405, Asn480, Asn607, Asn628, Asn706, Asn714, Asn911, Asn940, Asn962, Asn971, Asn1110, Asn1154, Asn1180, Asn1233, Asn1255, Asn1282, Asn1316, Asn1470, Asn1509, Asn1588, Asn1628, Asn1682, Asn1696, and Asn1730 are each glycosylated (N-linked (GlcNAc...) asparagine). Fibronectin type-III domains lie at 110–202 (KPGA…ASGV) and 203–294 (PTTA…PESK). Positions 571 to 671 (LPTLPRLVTV…EPFRGMTFEE (101 aa)) constitute a Fibronectin type-III 3 domain. Fibronectin type-III domains follow at residues 952-1047 (VPES…APEG) and 1051-1158 (APAN…SSDI). 4 consecutive Fibronectin type-III domains span residues 1459 to 1569 (DTEK…TLYG), 1570 to 1669 (VPEG…AKTF), 1671 to 1766 (TPLS…TTAG), and 1767 to 1868 (VPSK…AKDT). A compositionally biased stretch (low complexity) spans 1754-1764 (STSSPTSFKTT). The segment at 1754 to 1786 (STSSPTSFKTTAGVPSKPGTPKRAEDSKNSVQW) is disordered. Positions 1775–1786 (KRAEDSKNSVQW) are enriched in basic and acidic residues. Asn1792, Asn1795, and Asn1822 each carry an N-linked (GlcNAc...) asparagine glycan. The helical transmembrane segment at 1874–1898 (ITAIVAVIGAVVLGLTIIILFGFVW) threads the bilayer. The Cytoplasmic segment spans residues 1899-2311 (HQRWKSRKPA…SISSAELTSV (413 aa)). Residues 1961 to 2240 (LNLHKLLGSG…KLQEIRHSPL (280 aa)) form the Protein kinase domain. ATP contacts are provided by residues 1967–1975 (LGSGAFGEV) and Lys1996. The Proton acceptor role is filled by Asp2095. Phosphotyrosine; by autocatalysis is present on Tyr2131.

It belongs to the protein kinase superfamily. Tyr protein kinase family. Insulin receptor subfamily. As to quaternary structure, interacts with VAV3; constitutive interaction mediating VAV3 phosphorylation. In terms of tissue distribution, highest expression in kidney. Also expressed in gonad, thymus, bursa, brain and kidney.

The protein resides in the cell membrane. The catalysed reaction is L-tyrosyl-[protein] + ATP = O-phospho-L-tyrosyl-[protein] + ADP + H(+). Its function is as follows. Orphan receptor tyrosine kinase (RTK) that may activate several downstream signaling pathways related to cell differentiation, proliferation, growth and survival including the PI3 kinase-mTOR signaling pathway. Mediates the phosphorylation of PTPN11, an activator of this pathway. May also phosphorylate and activate the transcription factor STAT3 to control anchorage-independent cell growth. Mediates the phosphorylation and the activation of VAV3, a guanine nucleotide exchange factor regulating cell morphology. May activate other downstream signaling proteins including AKT1, MAPK1, MAPK3, IRS1, and PLCG2. This is Proto-oncogene tyrosine-protein kinase ROS (ROS1) from Gallus gallus (Chicken).